Reading from the N-terminus, the 427-residue chain is Peptidase B (427 aa).

The Mn(2+) site is built by K195 and D200. The active site involves K207. D218, D277, and E279 together coordinate Mn(2+). R281 is an active-site residue.

It belongs to the peptidase M17 family. As to quaternary structure, homohexamer. Mn(2+) serves as cofactor.

The protein resides in the cytoplasm. It carries out the reaction Release of an N-terminal amino acid, Xaa, from a peptide or arylamide. Xaa is preferably Glu or Asp but may be other amino acids, including Leu, Met, His, Cys and Gln.. In terms of biological role, probably plays an important role in intracellular peptide degradation. In Escherichia coli (strain SMS-3-5 / SECEC), this protein is Peptidase B.